The sequence spans 205 residues: Ypt/Rab-type GTPase ypt7 (205 aa).

GTP-binding positions include 17-23 (SGVGKTS), 33-40 (FSASYKAT), glycine 66, 125-128 (NKID), and 157-159 (SAK). The short motif at 37–45 (YKATIGADF) is the Effector region element. 2 S-geranylgeranyl cysteine lipidation sites follow: cysteine 203 and cysteine 205. Cysteine 205 carries the post-translational modification Cysteine methyl ester.

It belongs to the small GTPase superfamily. Rab family. In terms of assembly, interacts with the Rab GDP dissociation inhibitor GDI1.

Its subcellular location is the vacuole. Its activity is regulated as follows. Rab activation is generally mediated by a guanine exchange factor (GEF), while inactivation through hydrolysis of bound GTP is catalyzed by a GTPase activating protein (GAP). Its function is as follows. Ypt/Rab-type GTPases are key regulators of membrane trafficking and intracellular vesicular transport. They act as molecular switches that convert between GTP-bound and GDP-bound states, and regulate virtually all steps of membrane traffic from the formation of the transport vesicle at the donor membrane to its fusion at the target membrane. In the GDP-bound state, Ypt proteins are predominantly cytosolic, solubilized through the interaction with a GDP dissociation inhibitor (GDI). In the GTP-bound state, the proteins are membrane bound and interact with specific effector proteins that select cargo, promote vesicle movement, or verify the correct site of fusion. Required for fungal morphogenesis, vacuole fusion, autophagy, stress resistance and pathogenicity. The polypeptide is Ypt/Rab-type GTPase ypt7 (Pyricularia oryzae (strain 70-15 / ATCC MYA-4617 / FGSC 8958) (Rice blast fungus)).